We begin with the raw amino-acid sequence, 358 residues long: NADH-quinone oxidoreductase subunit H (358 aa).

The next 8 membrane-spanning stretches (helical) occupy residues 20-40 (ITVG…IPLI), 95-115 (ALFY…WAVI), 128-148 (IGLL…IIAG), 168-188 (ISYE…SGSM), 206-226 (VFSW…ISAV), 253-273 (GFAF…IAAL), 295-315 (TPSA…YLWI), and 334-354 (VLIP…ISPL).

The protein belongs to the complex I subunit 1 family. As to quaternary structure, NDH-1 is composed of 14 different subunits. Subunits NuoA, H, J, K, L, M, N constitute the membrane sector of the complex.

It localises to the cell inner membrane. The catalysed reaction is a quinone + NADH + 5 H(+)(in) = a quinol + NAD(+) + 4 H(+)(out). In terms of biological role, NDH-1 shuttles electrons from NADH, via FMN and iron-sulfur (Fe-S) centers, to quinones in the respiratory chain. The immediate electron acceptor for the enzyme in this species is believed to be ubiquinone. Couples the redox reaction to proton translocation (for every two electrons transferred, four hydrogen ions are translocated across the cytoplasmic membrane), and thus conserves the redox energy in a proton gradient. This subunit may bind ubiquinone. This is NADH-quinone oxidoreductase subunit H from Neisseria meningitidis serogroup B (strain ATCC BAA-335 / MC58).